The sequence spans 282 residues: 2-dehydro-3-deoxyphosphooctonate aldolase (282 aa).

Belongs to the KdsA family.

The protein localises to the cytoplasm. The enzyme catalyses D-arabinose 5-phosphate + phosphoenolpyruvate + H2O = 3-deoxy-alpha-D-manno-2-octulosonate-8-phosphate + phosphate. It functions in the pathway carbohydrate biosynthesis; 3-deoxy-D-manno-octulosonate biosynthesis; 3-deoxy-D-manno-octulosonate from D-ribulose 5-phosphate: step 2/3. Its pathway is bacterial outer membrane biogenesis; lipopolysaccharide biosynthesis. The polypeptide is 2-dehydro-3-deoxyphosphooctonate aldolase (Shewanella halifaxensis (strain HAW-EB4)).